Consider the following 894-residue polypeptide: Pentatricopeptide repeat-containing protein At1g19720 (894 aa).

PPR repeat units follow at residues 80–110 (KRST…FGLF), 114–144 (DVFV…MRER), 145–179 (NLFT…GVLP), 180–214 (DDFL…GMSS), 215–245 (CLRV…MRER), 246–280 (DVIA…GISP), 281–315 (GLVT…GITA), 316–350 (DVFT…GVVP), 351–385 (NAVT…GFID), 386–416 (DVLV…VKNK), 417–451 (DVYT…NLRP), 452–486 (NIIT…GKVQ), 488–522 (NTAT…RFMP), 523–557 (NSVT…NLDA), 558–588 (IHAV…METK), 589–623 (DIIT…GITP), 624–659 (NRGT…HIIP), and 660–694 (ALEH…SETP). Positions 695–770 (IWESFLTGCR…PLGQSWIEVR (76 aa)) are type E motif. Residues 771-801 (NLIHTFTTGDQSKLCTDVLYPLVEKMSRLDN) are type E(+) motif. A type DYW motif region spans residues 803–894 (SDQYNGELWI…NGDCSCKDYW (92 aa)).

It belongs to the PPR family. PCMP-H subfamily.

This Arabidopsis thaliana (Mouse-ear cress) protein is Pentatricopeptide repeat-containing protein At1g19720 (DYW7).